The primary structure comprises 113 residues: Large ribosomal subunit protein bL19 (113 aa).

Belongs to the bacterial ribosomal protein bL19 family.

Its function is as follows. This protein is located at the 30S-50S ribosomal subunit interface and may play a role in the structure and function of the aminoacyl-tRNA binding site. The polypeptide is Large ribosomal subunit protein bL19 (Mycolicibacterium vanbaalenii (strain DSM 7251 / JCM 13017 / BCRC 16820 / KCTC 9966 / NRRL B-24157 / PYR-1) (Mycobacterium vanbaalenii)).